The sequence spans 483 residues: Regulatory protein ViaA (483 aa).

Belongs to the ViaA family. In terms of assembly, homodimer. Interacts with RavA.

It is found in the cytoplasm. Component of the RavA-ViaA chaperone complex, which may act on the membrane to optimize the function of some of the respiratory chains. ViaA stimulates the ATPase activity of RavA. This Enterobacter sp. (strain 638) protein is Regulatory protein ViaA.